A 298-amino-acid polypeptide reads, in one-letter code: Protoheme IX farnesyltransferase (298 aa).

Transmembrane regions (helical) follow at residues Val24–Pro44, Leu49–Phe69, Leu100–Pro120, Leu121–Leu141, Ile149–Gly169, Ala175–Leu195, Leu220–Gly240, Trp244–Leu264, and Phe277–Leu297.

The protein belongs to the UbiA prenyltransferase family. Protoheme IX farnesyltransferase subfamily.

It is found in the cell inner membrane. It carries out the reaction heme b + (2E,6E)-farnesyl diphosphate + H2O = Fe(II)-heme o + diphosphate. It functions in the pathway porphyrin-containing compound metabolism; heme O biosynthesis; heme O from protoheme: step 1/1. Functionally, converts heme B (protoheme IX) to heme O by substitution of the vinyl group on carbon 2 of heme B porphyrin ring with a hydroxyethyl farnesyl side group. The polypeptide is Protoheme IX farnesyltransferase (Albidiferax ferrireducens (strain ATCC BAA-621 / DSM 15236 / T118) (Rhodoferax ferrireducens)).